A 498-amino-acid polypeptide reads, in one-letter code: Zinc finger protein 682 (498 aa).

The KRAB domain occupies 4–75 (LTFRDVTIEF…KRHETIAKPP (72 aa)). 10 consecutive C2H2-type zinc fingers follow at residues 173-195 (FKCM…KIIH), 201-223 (CICE…KRIH), 229-251 (YKCE…KRIH), 257-279 (YKCE…KKIH), 285-307 (YTCE…KTIH), 313-335 (YKCK…ERTH), 341-363 (YKCE…KVIH), 369-391 (YKCE…KRIH), 397-419 (YKCE…KRIH), and 425-447 (YNCE…KKIH). A C2H2-type 11; degenerate zinc finger spans residues 453–475 (YKCEECGKAFKRCSHLNEHKRVQ).

It belongs to the krueppel C2H2-type zinc-finger protein family.

The protein localises to the nucleus. In terms of biological role, may be involved in transcriptional regulation. The protein is Zinc finger protein 682 (ZNF682) of Homo sapiens (Human).